Consider the following 556-residue polypeptide: 2-succinyl-5-enolpyruvyl-6-hydroxy-3-cyclohexene-1-carboxylate synthase (556 aa).

The protein belongs to the TPP enzyme family. MenD subfamily. Homodimer. Requires Mg(2+) as cofactor. Mn(2+) serves as cofactor. The cofactor is thiamine diphosphate.

It carries out the reaction isochorismate + 2-oxoglutarate + H(+) = 5-enolpyruvoyl-6-hydroxy-2-succinyl-cyclohex-3-ene-1-carboxylate + CO2. It functions in the pathway quinol/quinone metabolism; 1,4-dihydroxy-2-naphthoate biosynthesis; 1,4-dihydroxy-2-naphthoate from chorismate: step 2/7. Its pathway is quinol/quinone metabolism; menaquinone biosynthesis. Catalyzes the thiamine diphosphate-dependent decarboxylation of 2-oxoglutarate and the subsequent addition of the resulting succinic semialdehyde-thiamine pyrophosphate anion to isochorismate to yield 2-succinyl-5-enolpyruvyl-6-hydroxy-3-cyclohexene-1-carboxylate (SEPHCHC). This Escherichia coli (strain K12 / MC4100 / BW2952) protein is 2-succinyl-5-enolpyruvyl-6-hydroxy-3-cyclohexene-1-carboxylate synthase.